The sequence spans 702 residues: Methionine--tRNA ligase (702 aa).

The 'HIGH' region signature appears at 14-24 (PYANGPVHLGH). Positions 146, 149, 159, and 162 each coordinate Zn(2+). A 'KMSKS' region motif is present at residues 344 to 348 (KFSKS). Lysine 347 is an ATP binding site. The 102-residue stretch at 601–702 (DFQKVDLRVA…GEKINGQSVQ (102 aa)) folds into the tRNA-binding domain.

The protein belongs to the class-I aminoacyl-tRNA synthetase family. MetG type 1 subfamily. As to quaternary structure, homodimer. Requires Zn(2+) as cofactor.

The protein resides in the cytoplasm. The catalysed reaction is tRNA(Met) + L-methionine + ATP = L-methionyl-tRNA(Met) + AMP + diphosphate. Functionally, is required not only for elongation of protein synthesis but also for the initiation of all mRNA translation through initiator tRNA(fMet) aminoacylation. The sequence is that of Methionine--tRNA ligase from Chlorobium luteolum (strain DSM 273 / BCRC 81028 / 2530) (Pelodictyon luteolum).